The sequence spans 332 residues: T-cell surface glycoprotein CD1c1 (332 aa).

The first 17 residues, 1 to 17 (MLFLHFLFLDVVLGGSI), serve as a signal peptide directing secretion. Residues 18–300 (TENVVQENIS…IILYWGHGLS (283 aa)) lie on the Extracellular side of the membrane. Residues Asn25, Asn38, Asn75, and Asn146 are each glycosylated (N-linked (GlcNAc...) asparagine). Intrachain disulfides connect Cys120-Cys184 and Cys224-Cys279. The region spanning 205–292 (PEVWLSSSPN…HSSLRDQDII (88 aa)) is the Ig-like domain. A helical transmembrane segment spans residues 301 to 321 (VILITFAVIVPLVLLIVLMLL). Residues 322 to 332 (YKKRCTYQGIQ) lie on the Cytoplasmic side of the membrane.

Heterodimer with B2M (beta-2-microglobulin).

It is found in the cell membrane. The protein resides in the endosome membrane. Functionally, antigen-presenting protein that binds self and non-self lipid and glycolipid antigens and presents them to T-cell receptors on natural killer T-cells. The protein is T-cell surface glycoprotein CD1c1 (CD1C1) of Cavia porcellus (Guinea pig).